Consider the following 356-residue polypeptide: Chorismate synthase (356 aa).

Residues arginine 48 and arginine 54 each contribute to the NADP(+) site. FMN contacts are provided by residues 125–127 (RSS), 237–238 (NA), glycine 282, 297–301 (KPTSS), and arginine 323.

This sequence belongs to the chorismate synthase family. As to quaternary structure, homotetramer. The cofactor is FMNH2.

It catalyses the reaction 5-O-(1-carboxyvinyl)-3-phosphoshikimate = chorismate + phosphate. Its pathway is metabolic intermediate biosynthesis; chorismate biosynthesis; chorismate from D-erythrose 4-phosphate and phosphoenolpyruvate: step 7/7. In terms of biological role, catalyzes the anti-1,4-elimination of the C-3 phosphate and the C-6 proR hydrogen from 5-enolpyruvylshikimate-3-phosphate (EPSP) to yield chorismate, which is the branch point compound that serves as the starting substrate for the three terminal pathways of aromatic amino acid biosynthesis. This reaction introduces a second double bond into the aromatic ring system. The sequence is that of Chorismate synthase from Rhizorhabdus wittichii (strain DSM 6014 / CCUG 31198 / JCM 15750 / NBRC 105917 / EY 4224 / RW1) (Sphingomonas wittichii).